A 2793-amino-acid chain; its full sequence is Iterative polyketide synthase afoE (2793 aa).

The interval 1–401 is N-terminal acylcarrier protein transacylase domain (SAT); that stretch reads MTRASASGSG…PEKPSFWLTP (401 aa). Cysteine 157 (nucleophile; for transacylase activity) is an active-site residue. Histidine 279 acts as the Proton donor/acceptor; for transacylase activity in catalysis. Residues 435–862 form the Ketosynthase family 3 (KS3) domain; sequence SEPIAIVGMS…GSNASMIVTQ (428 aa). Active-site for beta-ketoacyl synthase activity residues include cysteine 611, histidine 746, and histidine 785. Positions 977–1265 are malonyl-CoA:ACP transacylase (MAT); sequence FGGQISRFVG…SSTITVMAGR (289 aa). The segment at 1384–1515 is N-terminal hotdog fold; sequence WEFVGYQDDE…ATVEMRSSSD (132 aa). The PKS/mFAS DH domain occupies 1384–1698; it reads WEFVGYQDDE…YMRVAKASMS (315 aa). A product template (PT) domain region spans residues 1411-1696; the sequence is YVLSHVIAQT…VQYMRVAKAS (286 aa). The active-site Proton acceptor; for dehydratase activity is the histidine 1415. A C-terminal hotdog fold region spans residues 1550-1698; that stretch reads VEVLQGRNVY…YMRVAKASMS (149 aa). Residue aspartate 1607 is the Proton donor; for dehydratase activity of the active site. Residues 1734-1776 are disordered; sequence PEVRASSEPGAKVKASKTSKKEKKEKKPVTKAKSKSSKPSGWR. The span at 1747-1769 shows a compositional bias: basic residues; the sequence is KASKTSKKEKKEKKPVTKAKSKS. The 75-residue stretch at 1776–1850 folds into the Carrier domain; sequence RDITEEVRNL…KFVQCVSNAL (75 aa). At serine 1810 the chain carries O-(pantetheine 4'-phosphoryl)serine. Residues 1853 to 1903 are disordered; that stretch reads PNAGPAEAEDDEDEEKSDNSSSESASESDDAGSESSDTGILTPTGEEEQPL. Acidic residues predominate over residues 1859-1868; it reads EAEDDEDEEK. Residues 2115 to 2294 are methyltransferase domain; it reads NLLAERIGRT…HVDWTDGNLP (180 aa). The segment at 2360 to 2379 is disordered; the sequence is SRAEKESGKTQAPHAAPGRR. Residues 2387 to 2630 are NADPH-binding domain; that stretch reads VTGATGSLGS…QWIPVDYCAA (244 aa).

Requires pantetheine 4'-phosphate as cofactor.

It catalyses the reaction (3E,5E,7S)-5,7-dimethyl-2-oxonona-3,5-dienyl-[ACP] + 4 malonyl-CoA + AH2 + S-adenosyl-L-methionine + 3 H(+) = 6-[(3E,5E,7S)-5,7-dimethyl-2-oxonona-3,5-dienyl]-2,4-dihydroxy-3-methylbenzaldehyde + holo-[ACP] + A + S-adenosyl-L-homocysteine + 4 CO2 + 4 CoA + H2O. It participates in secondary metabolite biosynthesis. Its function is as follows. Iterative polyketide synthase; part of the gene cluster that mediates the biosynthesis of asperfuranone, a probable antitumor agent. The polyketide synthase afoG is responsible for producing the 3,5-dimethyloctadienone moiety from acetyl-CoA, three malonyl-CoA, and two S-adenosyl methionines (SAM). The 3,5-dimethyloctadienone moiety is then loaded onto the SAT domain of afoE and extended with four malonyl-CoA and one SAM, which leads to the formation of 2,4-dihydroxy-6-(5,7-dimethyl-2-oxo-trans-3-trans-5-nonadienyl)-3-methylbenzaldehyde (compound 2) after reductive release and aldol condensation. AfoD is the next enzyme in the biosynthesis sequence and hydroxylates the side chain at the benzylic position of compound 2. After benzylic hydroxylation, a furan ring is formed after five-member ring hemiacetal formation and water elimination. AfoF and afoC are proposed to oxidize the R-diketone proton and to reduce the unconjugated carbonyl group, respectively, to generate asperfuranone. Since no intermediates could be isolated from afoF and afoC deletants, the sequence of these two enzymes is not fully understood. Moreover, since afoC deletant still produces a small amount of asperfuranone, other endogenous oxidoreductases might catalyze the same reaction with much less efficiency. This chain is Iterative polyketide synthase afoE, found in Emericella nidulans (strain FGSC A4 / ATCC 38163 / CBS 112.46 / NRRL 194 / M139) (Aspergillus nidulans).